The sequence spans 199 residues: Protein ASYMMETRIC LEAVES 2 (199 aa).

Positions 8 to 109 constitute an LOB domain; the sequence is SPCAACKFLR…IDLSCAKSEL (102 aa).

The protein belongs to the LOB domain-containing protein family. Homo- and heterodimer with AS1. Interacts with AS1. Part of the AS1 repressor complex composed of AS1, LBD6/AS2 and HDA6. Interacts with LFR. In terms of tissue distribution, expressed in young shoots, roots, stems, leaves, flowers and adaxial domains of cotyledonary and leaves primordia.

It is found in the nucleus. Functionally, negative regulator of cell proliferation in the adaxial side of leaves. Regulates the formation of a symmetric lamina and the establishment of venation. Positively regulates LATERAL ORGAN BOUNDARIES (LOB) within the shoot apex, and the class III HD-ZIP genes REV, PHB, and PHV. Interacts directly with ASYMMETRIC LEAVES 1 (AS1) to repress the knox homeobox genes KNAT1, KNAT2, and KNAT6 and the abaxial determinants ARF3, KAN2 and YAB5. May act in parallel with the RDR6-SGS3-AGO7 pathway, an endogenous RNA silencing pathway, to regulate the leaf morphogenesis. Required for the binding of AS1 to the KNOX genes. Involved in leaf polarity establishment by functioning cooperatively with RH10 or RID2 to repress abaxial genes ARF3, ARF4, KAN1, KAN2, YAB1 and YAB5, and the knox homeobox genes KNAT1, KNAT2, KNAT6, and STM to promote adaxial development in leaf primordia at shoot apical meristems at high temperatures. In Arabidopsis thaliana (Mouse-ear cress), this protein is Protein ASYMMETRIC LEAVES 2.